We begin with the raw amino-acid sequence, 394 residues long: Elongation factor Tu (394 aa).

Positions 10–204 (KPHVNIGTIG…AVDSYIPQPV (195 aa)) constitute a tr-type G domain. The interval 19–26 (GHVDHGKT) is G1. 19–26 (GHVDHGKT) contacts GTP. Residue Thr26 participates in Mg(2+) binding. The interval 60-64 (GITIS) is G2. The interval 81–84 (DCPG) is G3. GTP contacts are provided by residues 81-85 (DCPGH) and 136-139 (NKVD). Residues 136 to 139 (NKVD) form a G4 region. The interval 174–176 (SAL) is G5.

It belongs to the TRAFAC class translation factor GTPase superfamily. Classic translation factor GTPase family. EF-Tu/EF-1A subfamily. As to quaternary structure, monomer.

The protein localises to the cytoplasm. It catalyses the reaction GTP + H2O = GDP + phosphate + H(+). Functionally, GTP hydrolase that promotes the GTP-dependent binding of aminoacyl-tRNA to the A-site of ribosomes during protein biosynthesis. In Rickettsia montanensis, this protein is Elongation factor Tu.